The chain runs to 517 residues: Probable cytosol aminopeptidase (517 aa).

Residues K279 and D284 each coordinate Mn(2+). K291 is a catalytic residue. Positions 302, 361, and 363 each coordinate Mn(2+). The active site involves R365.

Belongs to the peptidase M17 family. Requires Mn(2+) as cofactor.

The protein resides in the cytoplasm. It catalyses the reaction Release of an N-terminal amino acid, Xaa-|-Yaa-, in which Xaa is preferably Leu, but may be other amino acids including Pro although not Arg or Lys, and Yaa may be Pro. Amino acid amides and methyl esters are also readily hydrolyzed, but rates on arylamides are exceedingly low.. It carries out the reaction Release of an N-terminal amino acid, preferentially leucine, but not glutamic or aspartic acids.. In terms of biological role, presumably involved in the processing and regular turnover of intracellular proteins. Catalyzes the removal of unsubstituted N-terminal amino acids from various peptides. This is Probable cytosol aminopeptidase from Streptomyces coelicolor (strain ATCC BAA-471 / A3(2) / M145).